The sequence spans 113 residues: N-alpha-acetyltransferase 38-A, NatC auxiliary subunit (113 aa).

Positions 1 to 29 (MAAVLEENGCSRQSSPSAGDSDAEPGDTA) are disordered. Positions 28–106 (TARHKLESLL…IVSIQVELES (79 aa)) constitute a Sm domain.

This sequence belongs to the snRNP Sm proteins family. Component of the N-terminal acetyltransferase C (NatC) complex, which is composed of naa35, naa38 and naa30.

It localises to the cytoplasm. Auxillary component of the N-terminal acetyltransferase C (NatC) complex which catalyzes acetylation of N-terminal methionine residues. This chain is N-alpha-acetyltransferase 38-A, NatC auxiliary subunit (naa38-a), found in Xenopus laevis (African clawed frog).